An 84-amino-acid chain; its full sequence is U8-theraphotoxin-Hhn1f (84 aa).

A signal peptide spans 1–21 (MKVVLLVCLVWMMAMMELVSC). Cystine bridges form between Cys-23/Cys-35, Cys-29/Cys-44, Cys-34/Cys-67, Cys-54/Cys-75, and Cys-69/Cys-81.

It belongs to the AVIT (prokineticin) family. In terms of tissue distribution, expressed by the venom gland.

It is found in the secreted. This is U8-theraphotoxin-Hhn1f from Cyriopagopus hainanus (Chinese bird spider).